The following is a 392-amino-acid chain: ATP phosphoribosyltransferase regulatory subunit (392 aa).

It belongs to the class-II aminoacyl-tRNA synthetase family. HisZ subfamily. As to quaternary structure, heteromultimer composed of HisG and HisZ subunits.

The protein resides in the cytoplasm. Its pathway is amino-acid biosynthesis; L-histidine biosynthesis; L-histidine from 5-phospho-alpha-D-ribose 1-diphosphate: step 1/9. In terms of biological role, required for the first step of histidine biosynthesis. May allow the feedback regulation of ATP phosphoribosyltransferase activity by histidine. The polypeptide is ATP phosphoribosyltransferase regulatory subunit (Listeria monocytogenes serotype 4b (strain F2365)).